The following is a 233-amino-acid chain: MADS-box transcription factor 56 (233 aa).

One can recognise an MADS-box domain in the interval 1-61 (MVRGRTELKR…GRLYEFASAP (61 aa)). Positions 87 to 177 (IQQVKDDTLG…RGKHRNLEAA (91 aa)) constitute a K-box domain.

The protein localises to the nucleus. Its function is as follows. Probable transcription factor. This Oryza sativa subsp. japonica (Rice) protein is MADS-box transcription factor 56 (MADS56).